The primary structure comprises 224 residues: Precorrin-2 dehydrogenase (224 aa).

NAD(+) is bound by residues 26-27 and 47-50; these read SV and EFSQ.

This sequence belongs to the precorrin-2 dehydrogenase / sirohydrochlorin ferrochelatase family. Homodimer.

The enzyme catalyses precorrin-2 + NAD(+) = sirohydrochlorin + NADH + 2 H(+). It participates in porphyrin-containing compound metabolism; siroheme biosynthesis; sirohydrochlorin from precorrin-2: step 1/1. Its function is as follows. Involved in the archaeal biosynthesis of heme. Catalyzes the oxiation of precorrin-2 into sirohydroclorin. The sequence is that of Precorrin-2 dehydrogenase from Methanosarcina barkeri (strain Fusaro / DSM 804).